A 331-amino-acid chain; its full sequence is Fructose-1,6-bisphosphatase class 1 2 (331 aa).

Residues Glu-80, Asp-98, Leu-100, and Asp-101 each contribute to the Mg(2+) site. Substrate contacts are provided by residues 101 to 104 (DGSS) and Asn-189. Glu-261 provides a ligand contact to Mg(2+).

Belongs to the FBPase class 1 family. In terms of assembly, homotetramer. The cofactor is Mg(2+).

The protein resides in the cytoplasm. The enzyme catalyses beta-D-fructose 1,6-bisphosphate + H2O = beta-D-fructose 6-phosphate + phosphate. Its pathway is carbohydrate biosynthesis; Calvin cycle. The chain is Fructose-1,6-bisphosphatase class 1 2 from Cereibacter sphaeroides (strain ATCC 17029 / ATH 2.4.9) (Rhodobacter sphaeroides).